The sequence spans 77 residues: Probable Fe(2+)-trafficking protein (77 aa).

The protein belongs to the Fe(2+)-trafficking protein family.

Functionally, could be a mediator in iron transactions between iron acquisition and iron-requiring processes, such as synthesis and/or repair of Fe-S clusters in biosynthetic enzymes. The polypeptide is Probable Fe(2+)-trafficking protein (Baumannia cicadellinicola subsp. Homalodisca coagulata).